Consider the following 147-residue polypeptide: Heavy metal-dependent transcription regulator 1 (147 aa).

The 70-residue stretch at 1–70 (MNIGQASKVV…VEQIKDLLAL (70 aa)) folds into the HTH merR-type domain. A DNA-binding region (H-T-H motif) is located at residues 3 to 22 (IGQASKVVSGVSSKMIRYYE).

The protein resides in the cytoplasm. Functionally, transcriptional regulator involved in acid tolerance. Binds copper. This Rhizobium meliloti (strain 1021) (Ensifer meliloti) protein is Heavy metal-dependent transcription regulator 1 (hmrR1).